Here is a 151-residue protein sequence, read N- to C-terminus: UPF0178 protein PST_0536 (151 aa).

Belongs to the UPF0178 family.

The protein is UPF0178 protein PST_0536 of Stutzerimonas stutzeri (strain A1501) (Pseudomonas stutzeri).